We begin with the raw amino-acid sequence, 226 residues long: Large ribosomal subunit protein uL1 (226 aa).

It belongs to the universal ribosomal protein uL1 family. In terms of assembly, part of the 50S ribosomal subunit.

Functionally, binds directly to 23S rRNA. The L1 stalk is quite mobile in the ribosome, and is involved in E site tRNA release. In terms of biological role, protein L1 is also a translational repressor protein, it controls the translation of the L11 operon by binding to its mRNA. This chain is Large ribosomal subunit protein uL1, found in Borreliella burgdorferi (strain ZS7) (Borrelia burgdorferi).